The following is a 279-amino-acid chain: Protein COP1 SUPPRESSOR 2 (279 aa).

Disordered regions lie at residues 1–29 and 57–79; these read MPPKRNFRKRSFEEEEEDNDVNKAAISEE and SSTAQSSIGKVKPVEKTETEGEK. Residues 68 to 79 are compositionally biased toward basic and acidic residues; that stretch reads KPVEKTETEGEK. Residues 86-183 adopt a coiled-coil conformation; the sequence is DTFAQETAVL…EETEAAKKLL (98 aa). Basic and acidic residues predominate over residues 217–229; it reads LRREHPELYKDRG. The segment at 217-279 is disordered; sequence LRREHPELYK…KRERNRVMRR (63 aa). The segment covering 250 to 260 has biased composition (polar residues); the sequence is ADSGKSRQAAT. Basic residues predominate over residues 270-279; it reads KRERNRVMRR.

The protein belongs to the TLS1 family. Interacts with COP1.

Its subcellular location is the nucleus. It localises to the nucleus speckle. In terms of biological role, inhibits E3 ubiquitin-protein ligase activity of COP1, a central repressor of seedling photomorphogenesis. Represses COP1-mediated turnover of HY5 in the dark. Required for primary root development under normal light growth conditions. This Arabidopsis thaliana (Mouse-ear cress) protein is Protein COP1 SUPPRESSOR 2.